A 327-amino-acid polypeptide reads, in one-letter code: Poly(ribitol-phosphate) beta-N-acetylglucosaminyltransferase TarP (327 aa).

Residues P9, D41, N68, R76, and 92–94 (DSD) contribute to the UDP-N-acetyl-alpha-D-glucosamine site. D94 is a binding site for Mn(2+). The Proton acceptor role is filled by D181.

Belongs to the glycosyltransferase 2 family. In terms of assembly, homotrimer. It depends on Mn(2+) as a cofactor.

The enzyme catalyses 4-O-[(D-ribitylphospho)(n)-di{(2R)-glycerylphospho}]-N-acetyl-beta-D-mannosaminyl-(1-&gt;4)-N-acetyl-alpha-D-glucosaminyl di-trans,octa-cis-undecaprenyl diphosphate + n UDP-N-acetyl-alpha-D-glucosamine = 4-O-([3-N-acetyl-beta-D-glucosaminyl-1-D-ribitylphospho](n)-di{[2R]-1-glycerylphospho})-N-acetyl-beta-D-mannosaminyl-(1-&gt;4)-N-acetyl-alpha-D-glucosaminyl di-trans,octa-cis-undecaprenyl diphosphate + n UDP + n H(+). It participates in cell wall biogenesis; poly(ribitol phosphate) teichoic acid biosynthesis. Attaches beta-O-GlcNAc (beta-O-N-acetyl-D-glucosamine) residues to the C3 position of poly(RboP)-wall teichoic acids (WTAs). Attenuates immunogenicity of WTA and protects S.aureus against adaptative host defenses by allowing bacteria to evade recognition by preexisting anti-S.aureus antibodies. Also protects the cell from podophage infection. The chain is Poly(ribitol-phosphate) beta-N-acetylglucosaminyltransferase TarP from Staphylococcus aureus (strain N315).